A 1198-amino-acid polypeptide reads, in one-letter code: Fibronectin type-III domain-containing protein 3A (1198 aa).

A compositionally biased stretch (basic and acidic residues) spans 188–201 (KKLKDRQGTQKDKM). Residues 188 to 257 (KKLKDRQGTQ…VDPEMEEKDE (70 aa)) form a disordered region. Serine 203, serine 207, and serine 213 each carry phosphoserine. Fibronectin type-III domains lie at 268 to 369 (NIVK…TLSC), 373 to 465 (PPNA…TSGC), 469 to 562 (VPAS…TCPD), 566 to 660 (VPVK…TPAV), 664 to 757 (PCLP…TAPG), 761 to 851 (QCRP…TPPS), 863 to 950 (SDDD…TKPL), 951 to 1045 (PPDP…TPKS), and 1049 to 1151 (ALKA…TEPP). The residue at position 384 (lysine 384) is an N6-acetyllysine. The chain crosses the membrane as a helical span at residues 1177 to 1197 (ILVVFAFFSILIAFIIQYFVI).

Belongs to the FNDC3 family. Testis. Localizes to the acrosome of spermatids, as well as to Leydig cells. Can be detected on the acrosome beginning at steps 2-3 and continuing until step 12 of spermiogenesis.

Its subcellular location is the golgi apparatus membrane. Its function is as follows. Mediates spermatid-Sertoli adhesion during spermatogenesis. In Mus musculus (Mouse), this protein is Fibronectin type-III domain-containing protein 3A (Fndc3a).